The following is a 545-amino-acid chain: Thermosome subunit beta (545 aa).

The protein belongs to the TCP-1 chaperonin family. Forms a Heterooligomeric complex of two stacked eight-membered rings.

Its function is as follows. Molecular chaperone; binds unfolded polypeptides in vitro, and has a weak ATPase activity. The chain is Thermosome subunit beta (thsB) from Archaeoglobus fulgidus (strain ATCC 49558 / DSM 4304 / JCM 9628 / NBRC 100126 / VC-16).